Consider the following 319-residue polypeptide: Homoserine kinase (319 aa).

An ATP-binding site is contributed by 100–110 (PLSSGMGSSAS).

Belongs to the GHMP kinase family. Homoserine kinase subfamily.

Its subcellular location is the cytoplasm. It catalyses the reaction L-homoserine + ATP = O-phospho-L-homoserine + ADP + H(+). It participates in amino-acid biosynthesis; L-threonine biosynthesis; L-threonine from L-aspartate: step 4/5. In terms of biological role, catalyzes the ATP-dependent phosphorylation of L-homoserine to L-homoserine phosphate. The polypeptide is Homoserine kinase (Chloroherpeton thalassium (strain ATCC 35110 / GB-78)).